The chain runs to 264 residues: Thymidylate synthase (264 aa).

Position 21 (R21) interacts with dUMP. Position 51 (H51) interacts with (6R)-5,10-methylene-5,6,7,8-tetrahydrofolate. Residue 126-127 coordinates dUMP; that stretch reads RR. Residue C146 is the Nucleophile of the active site. Residues 166 to 169, N177, and 207 to 209 contribute to the dUMP site; these read RSAD and HLY. D169 is a binding site for (6R)-5,10-methylene-5,6,7,8-tetrahydrofolate. A263 provides a ligand contact to (6R)-5,10-methylene-5,6,7,8-tetrahydrofolate.

The protein belongs to the thymidylate synthase family. Bacterial-type ThyA subfamily. In terms of assembly, homodimer.

Its subcellular location is the cytoplasm. It catalyses the reaction dUMP + (6R)-5,10-methylene-5,6,7,8-tetrahydrofolate = 7,8-dihydrofolate + dTMP. It functions in the pathway pyrimidine metabolism; dTTP biosynthesis. Functionally, catalyzes the reductive methylation of 2'-deoxyuridine-5'-monophosphate (dUMP) to 2'-deoxythymidine-5'-monophosphate (dTMP) while utilizing 5,10-methylenetetrahydrofolate (mTHF) as the methyl donor and reductant in the reaction, yielding dihydrofolate (DHF) as a by-product. This enzymatic reaction provides an intracellular de novo source of dTMP, an essential precursor for DNA biosynthesis. This is Thymidylate synthase from Alkalilimnicola ehrlichii (strain ATCC BAA-1101 / DSM 17681 / MLHE-1).